Here is a 626-residue protein sequence, read N- to C-terminus: DNA-directed RNA polymerase subunit beta C-terminal section (626 aa).

Residues 287–307 (NTKSKNTGKGSKPPRASKAQN) form a disordered region.

The protein belongs to the RNA polymerase beta chain family. As to quaternary structure, in plastids the minimal PEP RNA polymerase catalytic core is composed of four subunits: alpha, beta, beta', and beta''. When a (nuclear-encoded) sigma factor is associated with the core the holoenzyme is formed, which can initiate transcription.

It localises to the plastid. The protein resides in the chloroplast. It catalyses the reaction RNA(n) + a ribonucleoside 5'-triphosphate = RNA(n+1) + diphosphate. Functionally, DNA-dependent RNA polymerase catalyzes the transcription of DNA into RNA using the four ribonucleoside triphosphates as substrates. The sequence is that of DNA-directed RNA polymerase subunit beta C-terminal section (rpoB2) from Chlamydomonas reinhardtii (Chlamydomonas smithii).